A 116-amino-acid chain; its full sequence is Large ribosomal subunit protein bL19 (116 aa).

The protein belongs to the bacterial ribosomal protein bL19 family.

This protein is located at the 30S-50S ribosomal subunit interface and may play a role in the structure and function of the aminoacyl-tRNA binding site. The protein is Large ribosomal subunit protein bL19 of Pseudomonas putida (strain W619).